Consider the following 523-residue polypeptide: Acetyl-CoA hydrolase (523 aa).

Gly-277 to Ile-281 provides a ligand contact to CoA. Residue Glu-302 is the 5-glutamyl coenzyme A thioester intermediate of the active site. CoA-binding residues include Asn-392 and Gly-396.

This sequence belongs to the acetyl-CoA hydrolase/transferase family.

It localises to the cytoplasm. It catalyses the reaction acetyl-CoA + H2O = acetate + CoA + H(+). Presumably involved in regulating the intracellular acetyl-CoA pool for fatty acid and cholesterol synthesis and fatty acid oxidation. The polypeptide is Acetyl-CoA hydrolase (ACH1) (Kluyveromyces lactis (strain ATCC 8585 / CBS 2359 / DSM 70799 / NBRC 1267 / NRRL Y-1140 / WM37) (Yeast)).